Here is a 249-residue protein sequence, read N- to C-terminus: 1-(5-phosphoribosyl)-5-[(5-phosphoribosylamino)methylideneamino] imidazole-4-carboxamide isomerase (249 aa).

The active-site Proton acceptor is Asp-11. The Proton donor role is filled by Asp-133.

The protein belongs to the HisA/HisF family.

Its subcellular location is the cytoplasm. The enzyme catalyses 1-(5-phospho-beta-D-ribosyl)-5-[(5-phospho-beta-D-ribosylamino)methylideneamino]imidazole-4-carboxamide = 5-[(5-phospho-1-deoxy-D-ribulos-1-ylimino)methylamino]-1-(5-phospho-beta-D-ribosyl)imidazole-4-carboxamide. It participates in amino-acid biosynthesis; L-histidine biosynthesis; L-histidine from 5-phospho-alpha-D-ribose 1-diphosphate: step 4/9. The sequence is that of 1-(5-phosphoribosyl)-5-[(5-phosphoribosylamino)methylideneamino] imidazole-4-carboxamide isomerase from Mannheimia succiniciproducens (strain KCTC 0769BP / MBEL55E).